A 459-amino-acid polypeptide reads, in one-letter code: Argininosuccinate lyase (459 aa).

This sequence belongs to the lyase 1 family. Argininosuccinate lyase subfamily.

The protein localises to the cytoplasm. The enzyme catalyses 2-(N(omega)-L-arginino)succinate = fumarate + L-arginine. Its pathway is amino-acid biosynthesis; L-arginine biosynthesis; L-arginine from L-ornithine and carbamoyl phosphate: step 3/3. The sequence is that of Argininosuccinate lyase from Methylobacterium radiotolerans (strain ATCC 27329 / DSM 1819 / JCM 2831 / NBRC 15690 / NCIMB 10815 / 0-1).